The primary structure comprises 2143 residues: Proteasome activator BLM10 (2143 aa).

The tract at residues 1–65 (MTANNDDDIK…SPLRARSATP (65 aa)) is disordered. 4 positions are modified to phosphoserine: serine 11, serine 29, serine 56, and serine 62. Residues threonine 64 and threonine 66 each carry the phosphothreonine modification. Serine 1041 carries the phosphoserine modification. The stretch at 1316-1355 (VVINKIIPSLEKAIKDHDYMKIQVILNVLLIKKIHRKLMT) is one HEAT 1 repeat. The interval 1648–1732 (CELNMSDLFE…LAWWLPAVVD (85 aa)) is bromodomain-like (BRDL). 3 HEAT repeats span residues 1779–1814 (PDVGKLFDELVFDHPYDQVRQAVAKLLTTLVQNQSN), 1902–1941 (YLVDYVLPFLIGLVKHKDVCALASLDPVRLYAGLGYMPIR), and 1985–2023 (EEKNKILEFVVSNLYNEQFVEVRVRAASILSDIVHNWKE). The short motif at 2141-2143 (YYA) is the YYX motif element.

Belongs to the BLM10 family. According to PubMed:12973301, colocalizes with nascent proteasome. According to PubMed:15778719, associates with proteasome core particles and also forms a complex with regulatory particle-core particle (RP-CP).

The protein resides in the nucleus. The protein localises to the cytoplasm. Associated component of the proteasome that specifically recognizes acetylated histones and promotes ATP- and ubiquitin-independent degradation of core histones during DNA damage response. Recognizes and binds acetylated histones via its bromodomain-like (BRDL) region and activates the proteasome by opening the gated channel for substrate entry. Binds to the core proteasome via its C-terminus, which occupies the same binding sites as the proteasomal ATPases, opening the closed structure of the proteasome via an active gating mechanism. Involved in DNA damage response in somatic cells: binds to acetylated histones and promotes degradation of histones following DNA double-strand breaks. In Saccharomyces cerevisiae (strain ATCC 204508 / S288c) (Baker's yeast), this protein is Proteasome activator BLM10 (BLM10).